The primary structure comprises 186 residues: Peptide deformylase (186 aa).

2 residues coordinate Fe cation: C113 and H157. The active site involves E158. Residue H161 coordinates Fe cation.

It belongs to the polypeptide deformylase family. Fe(2+) serves as cofactor.

The catalysed reaction is N-terminal N-formyl-L-methionyl-[peptide] + H2O = N-terminal L-methionyl-[peptide] + formate. In terms of biological role, removes the formyl group from the N-terminal Met of newly synthesized proteins. Requires at least a dipeptide for an efficient rate of reaction. N-terminal L-methionine is a prerequisite for activity but the enzyme has broad specificity at other positions. This chain is Peptide deformylase, found in Malacoplasma penetrans (strain HF-2) (Mycoplasma penetrans).